Here is a 291-residue protein sequence, read N- to C-terminus: MKDYLVKALAFDGEVRAYSVRTTNTVSEAQRRHDTWRTASAALGRSLTAGTMMGAMLKGDQKLTIKVEGNGPIGPILVDAHANGDVRGYVTNPHVDFEGTEQGKLRVYQAVGTEGFVTVIKDIGMREPFIGQSPIVSGELGEDFTYYFAVSEQTPSSVGVGVLVNGDDSVLAAGGFILQIMPGAQEETISFIEDRLQKIPPVSTLIERGLSPEELLYAVLGEDKVKVLETMDVQFNCTCSRERIESVLISLGKTELEQIREEEEETEVHCHFCNERYKFSKEDITNLIENL.

2 disulfides stabilise this stretch: C237–C239 and C270–C273.

The protein belongs to the HSP33 family. In terms of processing, under oxidizing conditions two disulfide bonds are formed involving the reactive cysteines. Under reducing conditions zinc is bound to the reactive cysteines and the protein is inactive.

Its subcellular location is the cytoplasm. Its function is as follows. Redox regulated molecular chaperone. Protects both thermally unfolding and oxidatively damaged proteins from irreversible aggregation. Plays an important role in the bacterial defense system toward oxidative stress. The chain is 33 kDa chaperonin from Bacillus cereus (strain G9842).